The primary structure comprises 188 residues: MRHLLTEVNVPIPDKVTITAKQRVVEVKGPLGTIKRAFRYASVDIQKPTADNVKLQIWQASRKERAVLQSIASQIKNMIRGVTEGYKFKMKLAFAHFPIQEAVAKDGSSIEIKHFLGEKRIRRIQALPGVKISRKDEEKNTLTLQGIDLNNVSQTCALIHQSCLVKEKDIRQFLDGIYVSDKRLAMNE.

This sequence belongs to the universal ribosomal protein uL6 family.

The protein is Large ribosomal subunit protein uL6 (RPL9) of Tetrahymena thermophila (strain SB210).